We begin with the raw amino-acid sequence, 288 residues long: Bifunctional protein FolD (288 aa).

NADP(+)-binding positions include 166-168 (GAS) and Ile232.

It belongs to the tetrahydrofolate dehydrogenase/cyclohydrolase family. Homodimer.

The enzyme catalyses (6R)-5,10-methylene-5,6,7,8-tetrahydrofolate + NADP(+) = (6R)-5,10-methenyltetrahydrofolate + NADPH. The catalysed reaction is (6R)-5,10-methenyltetrahydrofolate + H2O = (6R)-10-formyltetrahydrofolate + H(+). The protein operates within one-carbon metabolism; tetrahydrofolate interconversion. Catalyzes the oxidation of 5,10-methylenetetrahydrofolate to 5,10-methenyltetrahydrofolate and then the hydrolysis of 5,10-methenyltetrahydrofolate to 10-formyltetrahydrofolate. In Erwinia tasmaniensis (strain DSM 17950 / CFBP 7177 / CIP 109463 / NCPPB 4357 / Et1/99), this protein is Bifunctional protein FolD.